A 304-amino-acid polypeptide reads, in one-letter code: Non-specific ribonucleoside hydrolase RihC (304 aa).

His-233 is a catalytic residue.

The protein belongs to the IUNH family. RihC subfamily.

Hydrolyzes both purine and pyrimidine ribonucleosides with a broad-substrate specificity. The protein is Non-specific ribonucleoside hydrolase RihC of Klebsiella pneumoniae (strain 342).